A 935-amino-acid polypeptide reads, in one-letter code: Probable mediator of RNA polymerase II transcription subunit 15c (935 aa).

Positions 1 to 13 (MEGNTNWKPNEQG) are enriched in polar residues. Disordered regions lie at residues 1–28 (MEGN…WRSQ), 170–190 (NLPT…VSSS), 495–526 (SSVQ…HQMQ), 548–611 (QQVS…PVPG), and 635–654 (SSSK…PPEP). The segment covering 511 to 526 (MQQQQPQQGNHQHQMQ) has biased composition (low complexity). 2 stretches are compositionally biased toward polar residues: residues 548 to 577 (QQVS…SPQL) and 635 to 644 (SSSKLGTQET).

The protein belongs to the plant Mediator complex subunit 15 family. Component of the Mediator complex.

It is found in the nucleus. Its function is as follows. Component of the Mediator complex, a coactivator involved in the regulated transcription of nearly all RNA polymerase II-dependent genes. Mediator functions as a bridge to convey information from gene-specific regulatory proteins to the basal RNA polymerase II transcription machinery. The Mediator complex, having a compact conformation in its free form, is recruited to promoters by direct interactions with regulatory proteins and serves for the assembly of a functional preinitiation complex with RNA polymerase II and the general transcription factors. The polypeptide is Probable mediator of RNA polymerase II transcription subunit 15c (MED15C) (Arabidopsis thaliana (Mouse-ear cress)).